The following is a 1449-amino-acid chain: uncharacterized protein (1449 aa).

Over residues 1-13 (MELRSDASHKENV) the composition is skewed to basic and acidic residues. Disordered regions lie at residues 1 to 32 (MELR…RRSL), 123 to 201 (SNLS…LRSW), 258 to 298 (APQE…RRRR), 315 to 437 (LSDS…NKAQ), 523 to 551 (KQVQ…LGRS), 1257 to 1278 (DQGP…SKAH), and 1399 to 1449 (RLAA…QLQL). Over residues 123-133 (SNLSINETSSP) the composition is skewed to polar residues. 2 stretches are compositionally biased toward polar residues: residues 315 to 333 (LSDS…TLGT) and 384 to 394 (PCSSAFSNTAW). Residues 400-419 (QKGEEGAPRERVHREEERTA) are compositionally biased toward basic and acidic residues. Polar residues predominate over residues 426–437 (VPASSASKNKAQ). Residues 1258-1270 (QGPRAHSSPEPRA) show a composition bias toward basic and acidic residues.

This is an uncharacterized protein from Homo sapiens (Human).